Here is a 293-residue protein sequence, read N- to C-terminus: UPF0282 protein MK0213 (293 aa).

This sequence belongs to the UPF0282 family.

In Methanopyrus kandleri (strain AV19 / DSM 6324 / JCM 9639 / NBRC 100938), this protein is UPF0282 protein MK0213.